The sequence spans 1626 residues: Collagen alpha-1(XXII) chain (1626 aa).

A signal peptide spans 1 to 27 (MAGLRGNAVAGLLWMLLLWSGGGGCQA). In terms of domain architecture, VWFA spans 38-213 (DLVFLLDTSS…NAIDKIRGKL (176 aa)). Residues 239–427 (GTKEITGFDL…LQRIVIYCDS (189 aa)) form the Laminin G-like domain. N-linked (GlcNAc...) asparagine glycosylation is present at Asn-375. Collagen-like domains lie at 481–520 (GEKG…GDVG), 526–565 (QGEK…PGEV), 566–625 (GMRG…PGPS), 657–708 (GEQG…GIPG), 714–773 (GPPG…PGER), 774–833 (GEDG…PGLK), 868–922 (GPKG…GAPG), 925–984 (GAPG…PGKG), 1047–1095 (AGPP…PGKP), 1118–1155 (PPGP…AGPP), 1156–1215 (GLPG…AGPP), 1249–1308 (GKPG…PGKD), 1315–1374 (GPQG…PGEK), 1387–1446 (GEPG…PGPP), 1495–1550 (SQGR…PGAP), and 1575–1604 (DGLP…PPGQ). Disordered stretches follow at residues 506–1002 (PVGA…GPLG), 1019–1103 (GGQC…LLSP), 1119–1458 (PGPP…RGES), and 1491–1609 (YMKS…DPSQ). The span at 544-553 (DGSKGMRGEP) shows a compositional bias: basic and acidic residues. The segment covering 571-580 (QGPPGLPGPP) has biased composition (pro residues). A compositionally biased stretch (basic and acidic residues) spans 591 to 606 (ERGEKGTRGEKGERGL). Low complexity predominate over residues 661–670 (APGPRGHQGA). 2 stretches are compositionally biased toward pro residues: residues 715–728 (PPGP…PGPG) and 742–751 (KPGPPGPTGP). Composition is skewed to basic and acidic residues over residues 769 to 778 (EPGERGEDGL) and 815 to 826 (RGEKGDQGEKGE). Positions 908–939 (AHGAPGAAGNPGAPGHVGAPGPSGPPGSVGAP) are enriched in low complexity. The span at 945–957 (PGKDGERGEKGAA) shows a compositional bias: basic and acidic residues. Low complexity-rich tracts occupy residues 959-974 (EEGS…DPGA) and 1056-1065 (PGDKGSPGSR). Composition is skewed to basic and acidic residues over residues 1131–1151 (KGDK…KKGE) and 1173–1185 (RGAD…KGDQ). Over residues 1205–1223 (ADGIAGAAGPPGIQGSPGK) the composition is skewed to low complexity. Residues 1241–1250 (EEGKEGRDGK) are compositionally biased toward basic and acidic residues. The span at 1260-1275 (AGEPGLPGPEGARGPP) shows a compositional bias: low complexity. Over residues 1379 to 1389 (KEGVPGKPGEP) the composition is skewed to low complexity. A compositionally biased stretch (basic and acidic residues) spans 1391–1404 (FKGERGDPGIKGDK). The span at 1405-1414 (GPPGGKGQPG) shows a compositional bias: gly residues. A compositionally biased stretch (pro residues) spans 1440–1449 (VGPPGPPGQP). The segment covering 1521–1530 (GRPGQGGLEG) has biased composition (gly residues). Residues 1595–1604 (LPGPPGPPGQ) show a composition bias toward pro residues.

Belongs to the fibril-associated collagens with interrupted helices (FACIT) family. In terms of tissue distribution, restrictive expression is observed at tissue junctions such as the myotendinous junction in skeletal and heart muscle, the articular cartilage-synovial fluid junction, or the border between the anagen hair follicle and the dermis in the skin. It is deposited in the basement membrane zone of the myotendinous junction and the hair follicle and associated with the extrafibrillar matrix in cartilage.

The protein localises to the secreted. It is found in the extracellular space. Its subcellular location is the extracellular matrix. It localises to the cytoplasm. Its function is as follows. Acts as a cell adhesion ligand for skin epithelial cells and fibroblasts. The sequence is that of Collagen alpha-1(XXII) chain (COL22A1) from Homo sapiens (Human).